We begin with the raw amino-acid sequence, 176 residues long: NAD(P)H-quinone oxidoreductase subunit 6, chloroplastic (176 aa).

A run of 5 helical transmembrane segments spans residues phenylalanine 10–threonine 30, proline 32–leucine 52, leucine 63–serine 83, leucine 92–valine 112, and phenylalanine 152–valine 172.

The protein belongs to the complex I subunit 6 family. In terms of assembly, NDH is composed of at least 16 different subunits, 5 of which are encoded in the nucleus.

The protein localises to the plastid. Its subcellular location is the chloroplast thylakoid membrane. The enzyme catalyses a plastoquinone + NADH + (n+1) H(+)(in) = a plastoquinol + NAD(+) + n H(+)(out). It catalyses the reaction a plastoquinone + NADPH + (n+1) H(+)(in) = a plastoquinol + NADP(+) + n H(+)(out). Functionally, NDH shuttles electrons from NAD(P)H:plastoquinone, via FMN and iron-sulfur (Fe-S) centers, to quinones in the photosynthetic chain and possibly in a chloroplast respiratory chain. The immediate electron acceptor for the enzyme in this species is believed to be plastoquinone. Couples the redox reaction to proton translocation, and thus conserves the redox energy in a proton gradient. This Cicer arietinum (Chickpea) protein is NAD(P)H-quinone oxidoreductase subunit 6, chloroplastic (ndhG).